The sequence spans 161 residues: uncharacterized protein (161 aa).

Residues 1-29 adopt a coiled-coil conformation; that stretch reads MTLYDTVKELQEKLRNGEIEINTFLERLG.

This is an uncharacterized protein from Acidianus convivator (ATV).